Reading from the N-terminus, the 203-residue chain is Secreted phosphoprotein 24 (203 aa).

The first 23 residues, 1–23, serve as a signal peptide directing secretion; sequence MEKMAMKMLVIFVLGMNHWTCTG. 2 cysteine pairs are disulfide-bonded: Cys-86-Cys-97 and Cys-110-Cys-128. Phosphoserine is present on Ser-90. 4 positions are modified to phosphoserine: Ser-138, Ser-139, Ser-166, and Ser-175.

The protein belongs to the SPP2 family. In terms of processing, multiply phosphorylated at serine residues in Ser-X-Glu/Ser(P) sequences, a recognition motif for phosphorylation by secretory pathway protein kinase. Post-translationally, phosphorylation sites are present in the extracellular medium. As to expression, in liver and bone but not in heart, lung, kidney, or spleen.

Its subcellular location is the secreted. Functionally, could coordinate an aspect of bone turnover. This Bos taurus (Bovine) protein is Secreted phosphoprotein 24 (SPP2).